The chain runs to 471 residues: ATP synthase subunit beta (471 aa).

156–163 contributes to the ATP binding site; that stretch reads GGAGVGKT.

Belongs to the ATPase alpha/beta chains family. F-type ATPases have 2 components, CF(1) - the catalytic core - and CF(0) - the membrane proton channel. CF(1) has five subunits: alpha(3), beta(3), gamma(1), delta(1), epsilon(1). CF(0) has three main subunits: a(1), b(2) and c(9-12). The alpha and beta chains form an alternating ring which encloses part of the gamma chain. CF(1) is attached to CF(0) by a central stalk formed by the gamma and epsilon chains, while a peripheral stalk is formed by the delta and b chains.

It is found in the cell membrane. It carries out the reaction ATP + H2O + 4 H(+)(in) = ADP + phosphate + 5 H(+)(out). Its function is as follows. Produces ATP from ADP in the presence of a proton gradient across the membrane. The catalytic sites are hosted primarily by the beta subunits. This Mycoplasmoides gallisepticum (strain R(low / passage 15 / clone 2)) (Mycoplasma gallisepticum) protein is ATP synthase subunit beta.